The following is a 2512-amino-acid chain: Probable polyketide synthase 5 (2512 aa).

The region spanning Met-17–Glu-447 is the Ketosynthase family 3 (KS3) domain. Active-site for beta-ketoacyl synthase activity residues include Cys-187, His-329, and His-368. Positions Gly-638 to Tyr-671 are acyl/malonyl transferase. The For acyl/malonyl transferase activity role is filled by Ser-648. The segment at Ile-928–Ile-1050 is N-terminal hotdog fold. Positions Ile-928–Leu-1210 constitute a PKS/mFAS DH domain. Catalysis depends on His-962, which acts as the Proton acceptor; for dehydratase activity. The tract at residues Thr-1067–Leu-1210 is C-terminal hotdog fold. Asp-1125 functions as the Proton donor; for dehydratase activity in the catalytic mechanism. Positions Ala-2430–Leu-2507 constitute a Carrier domain. The residue at position 2467 (Ser-2467) is an O-(pantetheine 4'-phosphoryl)serine.

It depends on pantetheine 4'-phosphate as a cofactor.

Functionally, probable polyketide synthase. The protein is Probable polyketide synthase 5 (pks5) of Dictyostelium discoideum (Social amoeba).